Consider the following 191-residue polypeptide: Adenylate kinase (191 aa).

12–17 is a binding site for ATP; the sequence is GSGKTT. Residues 34 to 63 are NMP; sequence STGDLLRAESAKKTERGLLIEKFTSQGELV. AMP contacts are provided by residues T35, R40, 61–63, 88–91, and Q95; these read ELV and GYPR. The interval 130 to 136 is LID; it reads GRSRGAD. ATP is bound at residue R131. 2 residues coordinate AMP: R133 and R145. Residue R173 participates in ATP binding.

Belongs to the adenylate kinase family. In terms of assembly, monomer.

It localises to the cytoplasm. The catalysed reaction is AMP + ATP = 2 ADP. It functions in the pathway purine metabolism; AMP biosynthesis via salvage pathway; AMP from ADP: step 1/1. Its function is as follows. Catalyzes the reversible transfer of the terminal phosphate group between ATP and AMP. Plays an important role in cellular energy homeostasis and in adenine nucleotide metabolism. The sequence is that of Adenylate kinase from Helicobacter pylori (strain HPAG1).